Reading from the N-terminus, the 588-residue chain is Aspartate--tRNA ligase (588 aa).

Glu174 provides a ligand contact to L-aspartate. The aspartate stretch occupies residues 198 to 201 (QLFK). Position 220 (Arg220) interacts with L-aspartate. Residues 220–222 (RDE) and Gln229 each bind ATP. His448 lines the L-aspartate pocket. Glu482 is a binding site for ATP. Arg489 serves as a coordination point for L-aspartate. Residue 534–537 (GIDR) coordinates ATP.

The protein belongs to the class-II aminoacyl-tRNA synthetase family. Type 1 subfamily. In terms of assembly, homodimer.

The protein localises to the cytoplasm. The enzyme catalyses tRNA(Asp) + L-aspartate + ATP = L-aspartyl-tRNA(Asp) + AMP + diphosphate. Its function is as follows. Catalyzes the attachment of L-aspartate to tRNA(Asp) in a two-step reaction: L-aspartate is first activated by ATP to form Asp-AMP and then transferred to the acceptor end of tRNA(Asp). In Xanthomonas campestris pv. campestris (strain B100), this protein is Aspartate--tRNA ligase.